Reading from the N-terminus, the 294-residue chain is Potassium-transporting ATPase subunit beta (294 aa).

Residues 1–36 (MAALQEKKSCSQRMAEFRHYCWNPDTGQMLGRTPAR) are Cytoplasmic-facing. A helical; Signal-anchor for type II membrane protein transmembrane segment spans residues 37 to 57 (WVWISLYYAGFYVVMTGLFAL). Over 58–294 (CIYVLMQTID…KVEFKLTIQK (237 aa)) the chain is Extracellular. N-linked (GlcNAc...) asparagine glycosylation is found at Asn99, Asn103, Asn130, Asn146, and Asn161. Cys131 and Cys152 are joined by a disulfide. Cys162 and Cys178 are oxidised to a cystine. N-linked (GlcNAc...) asparagine glycans are attached at residues Asn193 and Asn225. Positions 194–294 (NTAPRVDCTF…KVEFKLTIQK (101 aa)) are immunoglobulin-like. Cys201 and Cys266 are joined by a disulfide.

Belongs to the X(+)/potassium ATPases subunit beta family. The ATPase pump is composed of two subunits: alpha (catalytic) and beta (regulatory). Interacts with alpha subunit ATP12A; this interaction is required for the formation of a functionally active pump and targeting at the plasma membrane. Interacts (via N-terminus) with alpha subunit ATP4A (via the P-domain). In terms of processing, N-glycosylation is necessary for assembly and functional expression of the pump at the plasma membrane. In terms of tissue distribution, expressed in parietal cells (at protein level).

Its subcellular location is the apical cell membrane. It localises to the cell membrane. In terms of biological role, the beta subunit of the gastric H(+)/K(+) ATPase pump which transports H(+) ions in exchange for K(+) ions across the apical membrane of parietal cells. Plays a structural and regulatory role in the assembly and membrane targeting of a functionally active pump. Within a transport cycle, the transfer of a H(+) ion across the membrane is coupled to ATP hydrolysis and is associated with a transient phosphorylation of the alpha subunit that shifts the pump conformation from inward-facing (E1) to outward-facing state (E2). Interacts with the phosphorylation domain of the alpha subunit and functions as a ratchet, stabilizing the lumenal-open E2 conformation and preventing the reverse reaction of the transport cycle. The chain is Potassium-transporting ATPase subunit beta (Atp4b) from Mus musculus (Mouse).